Reading from the N-terminus, the 506-residue chain is uncharacterized protein (506 aa).

Disordered regions lie at residues 104–144 (PNSS…ATSS) and 397–456 (QQQK…DQLP). The segment covering 130-144 (ESSPTLSSSSLATSS) has biased composition (low complexity). The span at 405 to 443 (IKDEDKNEKENKSENEEKEKEKEKEKEKEKEKEKEKEKE) shows a compositional bias: basic and acidic residues. Residues 405 to 455 (IKDEDKNEKENKSENEEKEKEKEKEKEKEKEKEKEKEKENEEGEEDNGDQL) adopt a coiled-coil conformation.

This is an uncharacterized protein from Dictyostelium discoideum (Social amoeba).